We begin with the raw amino-acid sequence, 237 residues long: Apoptosis regulator OPG045 (237 aa).

Belongs to the orthopoxvirus OPG045 family. As to quaternary structure, interacts with host BAK1, BAX and BID.

Its subcellular location is the host mitochondrion outer membrane. The protein localises to the host cytoplasm. In terms of biological role, plays a role in the inhibition of host apoptosis. Interacts with host BAX and thereby inhibits its activity. The protein is Apoptosis regulator OPG045 (OPG045) of Homo sapiens (Human).